The following is a 433-amino-acid chain: 2,2-dialkylglycine decarboxylase (433 aa).

N6-(pyridoxal phosphate)lysine is present on Lys272.

Belongs to the class-III pyridoxal-phosphate-dependent aminotransferase family. Homotetramer. It depends on pyridoxal 5'-phosphate as a cofactor.

It catalyses the reaction 2,2-dialkylglycine + pyruvate + H(+) = dialkyl ketone + L-alanine + CO2. Functionally, the dialkylglycine decarboxylase is of interest because it normally catalyzes both decarboxylation and amino transfer. It may be more properly described as a decarboxylating aminotransferase rather than an aminotransferring decarboxylase. In Burkholderia cepacia (Pseudomonas cepacia), this protein is 2,2-dialkylglycine decarboxylase (dgdA).